The following is a 226-amino-acid chain: Lysosomal-associated transmembrane protein 4B (226 aa).

4 helical membrane passes run 26–46 (ILLG…LLSA), 72–92 (MCIA…ATYG), 100–120 (WIIP…LVAV), and 153–173 (CLVL…GYLI). Residues 205 to 221 (PPYDDATVNSATKEPPP) form a required for NEDD4 interaction region.

The protein belongs to the LAPTM4/LAPTM5 transporter family. As to quaternary structure, homooligomer; upon reaching the lysosomes. Interacts with MCOLN1. Interacts with NEDD4; may play a role in the lysosomal sorting of LAPTM4B; enhances HGS association with NEDD4; mediates inhibition of EGFR degradation. Interacts with PIP5K1C; promotes SNX5 association with LAPTM4B; kinase activity of PIP5K1C is required; interaction is regulated by phosphatidylinositol 4,5-bisphosphate generated by PIP5K1C. Interacts with HGS; promotes HGS ubiquitination. Interacts with SNX5. Interacts with SLC3A2 and SLC7A5; recruits SLC3A2 and SLC7A5 to lysosomes to promote leucine uptake into these organelles and is required for mTORC1 activation. Interacts with LRRC32; decreases TGFB1 production in regulatory T cells. Interacts with BECN1; competes with EGFR for LAPTM4B binding; regulates EGFR activity. Interacts with EGFR; positively correlates with EGFR activation. In terms of processing, undergoes proteolytic cleavage following delivery to the lysosomes. Ubiquitinated by NEDD4. Strongly expressed in fetal ovary, testis, adrenal gland, liver and uterus, and weakly expressed in the spleen.

The protein localises to the endomembrane system. It localises to the late endosome membrane. Its subcellular location is the cell membrane. The protein resides in the cell projection. It is found in the lysosome membrane. The protein localises to the endosome membrane. It localises to the endosome. Its subcellular location is the multivesicular body membrane. The protein resides in the multivesicular body lumen. Functionally, required for optimal lysosomal function. Blocks EGF-stimulated EGFR intraluminal sorting and degradation. Conversely by binding with the phosphatidylinositol 4,5-bisphosphate, regulates its PIP5K1C interaction, inhibits HGS ubiquitination and relieves LAPTM4B inhibition of EGFR degradation. Recruits SLC3A2 and SLC7A5 (the Leu transporter) to the lysosome, promoting entry of leucine and other essential amino acid (EAA) into the lysosome, stimulating activation of proton-transporting vacuolar (V)-ATPase protein pump (V-ATPase) and hence mTORC1 activation. Plays a role as negative regulator of TGFB1 production in regulatory T cells. Binds ceramide and facilitates its exit from late endosome in order to control cell death pathways. This is Lysosomal-associated transmembrane protein 4B from Bos taurus (Bovine).